Reading from the N-terminus, the 428-residue chain is Ribulose bisphosphate carboxylase (428 aa).

Catalysis depends on Lys151, which acts as the Proton acceptor. Lys153 contributes to the substrate binding site. Mg(2+) contacts are provided by Lys177, Asp179, and Glu180. Residue Lys177 is modified to N6-carboxylysine. Catalysis depends on His270, which acts as the Proton acceptor. Substrate contacts are provided by residues Arg271, His303, 354-356 (SGG), and 376-379 (QFGG).

The protein belongs to the RuBisCO large chain family. Type III subfamily. As to quaternary structure, homodimer. In contrast to form I RuBisCO, the form III RuBisCO is composed solely of large subunits. Requires Mg(2+) as cofactor.

The enzyme catalyses 2 (2R)-3-phosphoglycerate + 2 H(+) = D-ribulose 1,5-bisphosphate + CO2 + H2O. It catalyses the reaction D-ribulose 1,5-bisphosphate + O2 = 2-phosphoglycolate + (2R)-3-phosphoglycerate + 2 H(+). Its activity is regulated as follows. Reversibly inhibited by O(2). Its function is as follows. Catalyzes the addition of molecular CO(2) and H(2)O to ribulose 1,5-bisphosphate (RuBP), generating two molecules of 3-phosphoglycerate (3-PGA). Functions in an archaeal AMP degradation pathway, together with AMP phosphorylase and R15P isomerase. In Methanosarcina acetivorans (strain ATCC 35395 / DSM 2834 / JCM 12185 / C2A), this protein is Ribulose bisphosphate carboxylase.